A 116-amino-acid chain; its full sequence is Large ribosomal subunit protein bL17 (116 aa).

This sequence belongs to the bacterial ribosomal protein bL17 family. As to quaternary structure, part of the 50S ribosomal subunit. Contacts protein L32.

In Rippkaea orientalis (strain PCC 8801 / RF-1) (Cyanothece sp. (strain PCC 8801)), this protein is Large ribosomal subunit protein bL17.